The following is a 201-amino-acid chain: Lipopolysaccharide core heptose(II)-phosphate phosphatase (201 aa).

Residues methionine 1–serine 35 form the signal peptide.

This sequence belongs to the phosphoglycerate mutase family. Ais subfamily.

It is found in the periplasm. The protein operates within bacterial outer membrane biogenesis; lipopolysaccharide metabolism. Catalyzes the dephosphorylation of heptose(II) of the outer membrane lipopolysaccharide core. The sequence is that of Lipopolysaccharide core heptose(II)-phosphate phosphatase from Salmonella arizonae (strain ATCC BAA-731 / CDC346-86 / RSK2980).